The chain runs to 1033 residues: Translation initiation factor IF-2 (1033 aa).

The disordered stretch occupies residues 49-432; sequence AFQQGGGNGR…APSVGGVMLP (384 aa). A compositionally biased stretch (low complexity) spans 59–113; that stretch reads SAGRPAAPKKAAPRPSAPSPAQAGPSQAAPAAGDRAAAPRPSAAPKAPAAQQPAA. 2 stretches are compositionally biased toward pro residues: residues 114–140 and 148–164; these read PSAP…PAPA and PAAP…PSGP. Residues 171 to 189 show a composition bias toward low complexity; it reads PGAPKPGGARPSGPGQDRG. Residues 190 to 201 show a composition bias toward gly residues; that stretch reads QQGGQGRPGGQR. The span at 236 to 246 shows a compositional bias: pro residues; that stretch reads APRPQGGPRPG. Positions 247–268 are enriched in gly residues; sequence GPGGAPGGGPRPQGPGGQGGGP. A compositionally biased stretch (low complexity) spans 305–314; that stretch reads MMPQRPAAGP. Positions 318–401 are enriched in gly residues; the sequence is PGGGGRGPGG…GTQGAFGRPG (84 aa). Positions 405-414 are enriched in basic residues; that stretch reads RRGRKSKRQR. The tr-type G domain maps to 526–698; sequence VRPPVVTVMG…VVLTADASLD (173 aa). The tract at residues 535–542 is G1; it reads GHVDHGKT. Residue 535 to 542 coordinates GTP; it reads GHVDHGKT. The G2 stretch occupies residues 560–564; sequence GITQH. The segment at 585-588 is G3; the sequence is DTPG. Residues 585-589 and 639-642 contribute to the GTP site; these read DTPGH and NKID. Positions 639-642 are G4; that stretch reads NKID. The segment at 675–677 is G5; sequence SAK.

It belongs to the TRAFAC class translation factor GTPase superfamily. Classic translation factor GTPase family. IF-2 subfamily.

The protein localises to the cytoplasm. Functionally, one of the essential components for the initiation of protein synthesis. Protects formylmethionyl-tRNA from spontaneous hydrolysis and promotes its binding to the 30S ribosomal subunits. Also involved in the hydrolysis of GTP during the formation of the 70S ribosomal complex. This chain is Translation initiation factor IF-2, found in Streptomyces coelicolor (strain ATCC BAA-471 / A3(2) / M145).